A 436-amino-acid polypeptide reads, in one-letter code: Trigger factor (436 aa).

A PPIase FKBP-type domain is found at 161–246; sequence EDQLNIDFVG…VNTVSEPKLP (86 aa).

It belongs to the FKBP-type PPIase family. Tig subfamily.

It localises to the cytoplasm. It carries out the reaction [protein]-peptidylproline (omega=180) = [protein]-peptidylproline (omega=0). Its function is as follows. Involved in protein export. Acts as a chaperone by maintaining the newly synthesized protein in an open conformation. Functions as a peptidyl-prolyl cis-trans isomerase. This chain is Trigger factor, found in Pseudomonas savastanoi pv. phaseolicola (strain 1448A / Race 6) (Pseudomonas syringae pv. phaseolicola (strain 1448A / Race 6)).